The primary structure comprises 316 residues: tRNA dimethylallyltransferase (316 aa).

12 to 19 (GPTASGKT) is an ATP binding site. 14 to 19 (TASGKT) is a binding site for substrate. 2 interaction with substrate tRNA regions span residues 37 to 40 (DSAL) and 161 to 165 (QRILR).

Belongs to the IPP transferase family. As to quaternary structure, monomer. Mg(2+) serves as cofactor.

It carries out the reaction adenosine(37) in tRNA + dimethylallyl diphosphate = N(6)-dimethylallyladenosine(37) in tRNA + diphosphate. Functionally, catalyzes the transfer of a dimethylallyl group onto the adenine at position 37 in tRNAs that read codons beginning with uridine, leading to the formation of N6-(dimethylallyl)adenosine (i(6)A). In Idiomarina loihiensis (strain ATCC BAA-735 / DSM 15497 / L2-TR), this protein is tRNA dimethylallyltransferase.